Reading from the N-terminus, the 287-residue chain is Pantothenate synthetase (287 aa).

M30–H37 provides a ligand contact to ATP. H37 functions as the Proton donor in the catalytic mechanism. Residue Q61 participates in (R)-pantoate binding. Q61 lines the beta-alanine pocket. G149–D152 serves as a coordination point for ATP. Residue Q155 participates in (R)-pantoate binding. ATP contacts are provided by residues V178 and L186–R189.

The protein belongs to the pantothenate synthetase family. In terms of assembly, homodimer.

It is found in the cytoplasm. It carries out the reaction (R)-pantoate + beta-alanine + ATP = (R)-pantothenate + AMP + diphosphate + H(+). The protein operates within cofactor biosynthesis; (R)-pantothenate biosynthesis; (R)-pantothenate from (R)-pantoate and beta-alanine: step 1/1. Functionally, catalyzes the condensation of pantoate with beta-alanine in an ATP-dependent reaction via a pantoyl-adenylate intermediate. The protein is Pantothenate synthetase of Pseudomonas putida (strain ATCC 47054 / DSM 6125 / CFBP 8728 / NCIMB 11950 / KT2440).